Reading from the N-terminus, the 639-residue chain is Threonine--tRNA ligase (639 aa).

Positions 1–62 constitute a TGS domain; the sequence is MYQLTLPDKS…ETDANIEVLT (62 aa). The interval 246 to 537 is catalytic; sequence DHRKIGKELD…LIEHYEGKFP (292 aa). Zn(2+)-binding residues include cysteine 337, histidine 388, and histidine 514.

The protein belongs to the class-II aminoacyl-tRNA synthetase family. Homodimer. Requires Zn(2+) as cofactor.

It is found in the cytoplasm. The catalysed reaction is tRNA(Thr) + L-threonine + ATP = L-threonyl-tRNA(Thr) + AMP + diphosphate + H(+). Its function is as follows. Catalyzes the attachment of threonine to tRNA(Thr) in a two-step reaction: L-threonine is first activated by ATP to form Thr-AMP and then transferred to the acceptor end of tRNA(Thr). Also edits incorrectly charged L-seryl-tRNA(Thr). The chain is Threonine--tRNA ligase from Leptospira borgpetersenii serovar Hardjo-bovis (strain JB197).